A 335-amino-acid polypeptide reads, in one-letter code: Endo-1,4-beta-xylanase S20 (335 aa).

The N-terminal stretch at M1 to A22 is a signal peptide. In terms of domain architecture, GH11 spans N39–A241. 2 N-linked (GlcNAc...) asparagine glycosylation sites follow: N42 and N78. E134 (nucleophile) is an active-site residue. N-linked (GlcNAc...) asparagine glycosylation is present at N202. Catalysis depends on E228, which acts as the Proton donor. N-linked (GlcNAc...) asparagine glycosylation is present at N251. Positions N251–N291 are disordered. Over residues N257–N291 the composition is skewed to low complexity. Residues N300 to Q335 form the CBM1 domain.

The protein belongs to the glycosyl hydrolase 11 (cellulase G) family.

The protein localises to the secreted. It carries out the reaction Endohydrolysis of (1-&gt;4)-beta-D-xylosidic linkages in xylans.. The protein operates within glycan degradation; xylan degradation. Endo-1,4-beta-xylanase involved in the hydrolysis of xylan, a major structural heterogeneous polysaccharide found in plant biomass representing the second most abundant polysaccharide in the biosphere, after cellulose. This is Endo-1,4-beta-xylanase S20 (xynS20) from Neocallimastix patriciarum (Rumen fungus).